Reading from the N-terminus, the 328-residue chain is tRNA uridine(34) hydroxylase (328 aa).

Residues 130-224 enclose the Rhodanese domain; it reads LDKDTVVLDT…YGKDPEVQGE (95 aa). Residue Cys184 is the Cysteine persulfide intermediate of the active site.

This sequence belongs to the TrhO family.

It carries out the reaction uridine(34) in tRNA + AH2 + O2 = 5-hydroxyuridine(34) in tRNA + A + H2O. Functionally, catalyzes oxygen-dependent 5-hydroxyuridine (ho5U) modification at position 34 in tRNAs. The polypeptide is tRNA uridine(34) hydroxylase (Streptococcus pneumoniae (strain Taiwan19F-14)).